A 414-amino-acid chain; its full sequence is MRAHPGGGRCCPEQEEGESAAGGSGAGGDSAIEQGGQGSALAPSPVSGVRREGARGGGRGRGRWKQAARGGGVCGRGRGRGRGRGRGRGRGRGRGRPQSGGSGLGGDGGGGAGGCGGGSGGGVAPRRDPVPFPSGSSGPGPRGPRATESGKRMDCPALPPGWKKEEVIRKSGLSAGKSDVYYFSPSGKKFRSKPQLARYLGNAVDLSSFDFRTGKMMPSKLQKNKQRLRNDPLNQNKGKPDLNTTLPIRQTASIFKQPVTKFTNHPSNKVKSDPQRMNEQPRQLFWEKRLQGLSASDVTEQIIKTMELPKGLQGVGPGSNDETLLSAVASALHTSSAPITGQVSAAVEKNPAVWLNTSQPLCKAFIVTDEDIRKQEERVQQVRKKLEEALMADILSRAADTEEVDIDMDSGDEA.

Residues 1–152 (MRAHPGGGRC…GPRATESGKR (152 aa)) are required for interaction with DHX9 and PRMT5. The disordered stretch occupies residues 1 to 163 (MRAHPGGGRC…DCPALPPGWK (163 aa)). Basic residues predominate over residues 77–95 (GRGRGRGRGRGRGRGRGRG). Gly residues predominate over residues 98–123 (QSGGSGLGGDGGGGAGGCGGGSGGGV). Residues 148-216 (ESGKRMDCPA…SSFDFRTGKM (69 aa)) form the MBD domain. Ser-184 carries the post-translational modification Phosphoserine. The tract at residues 217-244 (MPSKLQKNKQRLRNDPLNQNKGKPDLNT) is disordered. The span at 232 to 244 (PLNQNKGKPDLNT) shows a compositional bias: polar residues. Position 410 is a phosphoserine (Ser-410).

As to quaternary structure, heterodimer with MBD3 (via N-terminus). Component of the MeCP1 complex that contains HDAC1 and HDAC2. Component of the nucleosome remodeling and deacetylase (NuRD) repressor complex, composed of core proteins MTA1, MTA2, MTA3, RBBP4, RBBP7, HDAC1, HDAC2, MBD2, MBD3, and peripherally associated proteins CDK2AP1, CDK2AP2, GATAD2A, GATAD2B, CHD3, CHD4 and CHD5. The exact stoichiometry of the NuRD complex is unknown, and some subunits such as MBD2 and MBD3, GATAD2A and GATAD2B, and CHD3, CHD4 and CHD5 define mutually exclusive NuRD complexes. Interacts with CDK2AP1. Interacts with DHX9. Interacts with DNMT1. Interacts with GATAD2A/p66-alpha. Interacts with GATAD2B/p66-beta. Interacts with GPN1. Interacts with MIZF. Interacts with PRMT5. Interacts with SIN3A. Interacts with SPHK2. As to expression, highly expressed in brain, heart, kidney, lung, skeletal muscle, spleen and testis. Detected at lower levels in embryonic stem cells.

The protein localises to the nucleus. The protein resides in the chromosome. Binds CpG islands in promoters where the DNA is methylated at position 5 of cytosine within CpG dinucleotides. Binds hemimethylated DNA as well. Recruits histone deacetylases and DNA methyltransferases to chromatin. Acts as a component of the histone deacetylase NuRD complex which participates in the remodeling of chromatin. Acts as transcriptional repressor and plays a role in gene silencing. Functions as a scaffold protein, targeting GATAD2A and GATAD2B to chromatin to promote repression. May enhance the activation of some unmethylated cAMP-responsive promoters. Selectively represses transcription activity of methylated rRNA promoters. The chain is Methyl-CpG-binding domain protein 2 from Mus musculus (Mouse).